Here is a 322-residue protein sequence, read N- to C-terminus: tRNA U34 carboxymethyltransferase (322 aa).

Carboxy-S-adenosyl-L-methionine contacts are provided by residues K91, W105, K110, G129, 179–180 (LE), M195, Y199, and R314.

The protein belongs to the class I-like SAM-binding methyltransferase superfamily. CmoB family. Homotetramer.

It carries out the reaction carboxy-S-adenosyl-L-methionine + 5-hydroxyuridine(34) in tRNA = 5-carboxymethoxyuridine(34) in tRNA + S-adenosyl-L-homocysteine + H(+). In terms of biological role, catalyzes carboxymethyl transfer from carboxy-S-adenosyl-L-methionine (Cx-SAM) to 5-hydroxyuridine (ho5U) to form 5-carboxymethoxyuridine (cmo5U) at position 34 in tRNAs. The polypeptide is tRNA U34 carboxymethyltransferase (Pseudomonas paraeruginosa (strain DSM 24068 / PA7) (Pseudomonas aeruginosa (strain PA7))).